The primary structure comprises 22 residues: GMASKAGSVLGKVAKVALKAAL.

A Leucine amide modification is found at leucine 22.

As to expression, expressed by the skin glands.

It is found in the secreted. In terms of biological role, antimicrobial peptide. The protein is Peptide PGLa-R1 of Xenopus ruwenzoriensis (Uganda clawed frog).